A 3020-amino-acid chain; its full sequence is Protein furry homolog (3020 aa).

The residue at position 213 (Tyr213) is a Phosphotyrosine. Disordered regions lie at residues 1378-1404 (GSSP…LKGN), 1529-1554 (ASGT…ESKI), and 1746-1773 (SSPV…GNLP). Phosphoserine is present on residues Ser1382 and Ser1383. Over residues 1752–1772 (SGLNSSSTSSSISLGGSSGNL) the composition is skewed to low complexity. A phosphoserine mark is found at Ser1936 and Ser1940. Residues 1937–1956 (RSSSPDLSSSSKLTASRKST) show a composition bias toward low complexity. Disordered stretches follow at residues 1937 to 2042 (RSSS…PSHV) and 2355 to 2384 (LQNS…SNSN). The span at 1966 to 1976 (PGSGGGGGGSG) shows a compositional bias: gly residues. The segment covering 2016 to 2042 (ACTQQGLSSKTRSNSSLKESLTDPSHV) has biased composition (polar residues). A compositionally biased stretch (low complexity) spans 2369 to 2384 (AVTRSASSTSSGSNSN). Phosphoserine is present on residues Ser2427 and Ser2428. A disordered region spans residues 2439–2458 (TSLVSSEDGPREQENMDDTN). Ser2495 is subject to Phosphoserine. Residues 2508-2535 (EERQLSRSTPSLNKMSHEDSDESSEEDL) form a disordered region. Phosphothreonine; by CDK1 is present on Thr2516. The segment covering 2526–2535 (DSDESSEEDL) has biased composition (acidic residues). Ser2815 carries the post-translational modification Phosphoserine.

The protein belongs to the furry protein family. As to quaternary structure, when phosphorylated by CDK1, interacts with PLK1; this interaction occurs in mitotic cells, but not in interphase cells, and leads to further FRY phosphorylation by PLK1. Post-translationally, phosphorylated by AURKA, CDK1 and PLK1.

Its subcellular location is the cytoplasm. It localises to the cytoskeleton. The protein localises to the microtubule organizing center. The protein resides in the centrosome. It is found in the spindle pole. Plays a crucial role in the structural integrity of mitotic centrosomes and in the maintenance of spindle bipolarity by promoting PLK1 activity at the spindle poles in early mitosis. May function as a scaffold promoting the interaction between AURKA and PLK1, thereby enhancing AURKA-mediated PLK1 phosphorylation. This chain is Protein furry homolog (Fry), found in Mus musculus (Mouse).